Consider the following 478-residue polypeptide: Metalloendopeptidase OMA1, mitochondrial (478 aa).

Residues 134–164 are stress-sensor region; that stretch reads LGRSIRKWWVALPANKKQLFREWSWRRRWHF. Residues 163–183 traverse the membrane as a helical segment; it reads HFLGAGTGLLFIASLFFFTHL. Residue His-296 coordinates Zn(2+). Residue Glu-297 is part of the active site. Positions 300 and 361 each coordinate Zn(2+). Residues Cys-376 and Cys-434 are joined by a disulfide bond.

This sequence belongs to the peptidase M48 family. Homooligomer. Requires Zn(2+) as cofactor. Autocatalytically cleaved in response to mitochondrial depolarization both at the N-terminus and C-terminus to generate the short active form (S-OMA1). The S-OMA1 form is unstable. Post-translationally, may form a redox-dependent disulfide bond. Exists in a semi-oxidized state and is activated by prolonged hypoxia.

The protein localises to the mitochondrion inner membrane. Its activity is regulated as follows. Protease activity is activated upon autocatalytic cleavage in response to mitochondrial depolarization. Functionally, metalloprotease that is part of the quality control system in the inner membrane of mitochondria. Activated in response to various mitochondrial stress, leading to the proteolytic cleavage of target proteins, such as opa1 and dele1. Involved in the fusion of the mitochondrial inner membranes by mediating cleavage of opa1 at S1 position, generating the soluble opa1 (S-opa1), which cooperates with the membrane form (L-opa1) to coordinate the fusion of mitochondrial inner membranes. Following stress conditions that induce loss of mitochondrial membrane potential, mediates cleavage of opa1, leading to excess production of soluble opa1 (S-opa1) and negative regulation of mitochondrial fusion. Also acts as an activator of the integrated stress response (ISR): in response to mitochondrial stress, mediates cleavage of dele1 to generate the processed form of dele1 (S-DELE1), which translocates to the cytosol and activates eif2ak1/hri to trigger the ISR. Required for the stability of the respiratory supercomplexes. In Danio rerio (Zebrafish), this protein is Metalloendopeptidase OMA1, mitochondrial.